A 319-amino-acid chain; its full sequence is Acetyl-coenzyme A carboxylase carboxyl transferase subunit alpha (319 aa).

The CoA carboxyltransferase C-terminal domain maps to 39–293; the sequence is KLEQKAAQLL…GDAIAEELKG (255 aa).

Belongs to the AccA family. As to quaternary structure, acetyl-CoA carboxylase is a heterohexamer composed of biotin carboxyl carrier protein (AccB), biotin carboxylase (AccC) and two subunits each of ACCase subunit alpha (AccA) and ACCase subunit beta (AccD).

It localises to the cytoplasm. It catalyses the reaction N(6)-carboxybiotinyl-L-lysyl-[protein] + acetyl-CoA = N(6)-biotinyl-L-lysyl-[protein] + malonyl-CoA. The protein operates within lipid metabolism; malonyl-CoA biosynthesis; malonyl-CoA from acetyl-CoA: step 1/1. Functionally, component of the acetyl coenzyme A carboxylase (ACC) complex. First, biotin carboxylase catalyzes the carboxylation of biotin on its carrier protein (BCCP) and then the CO(2) group is transferred by the carboxyltransferase to acetyl-CoA to form malonyl-CoA. This Parvibaculum lavamentivorans (strain DS-1 / DSM 13023 / NCIMB 13966) protein is Acetyl-coenzyme A carboxylase carboxyl transferase subunit alpha.